Here is a 1132-residue protein sequence, read N- to C-terminus: Protein CROWDED NUCLEI 1 (1132 aa).

The interval 1 to 31 (MSTPLKVWQRWSTPTKATNPDSNGSSHGTGL) is disordered. A compositionally biased stretch (polar residues) spans 10 to 28 (RWSTPTKATNPDSNGSSHG). Residues 73 to 714 (LLIEKKEWSS…KKLKEQREQF (642 aa)) adopt a coiled-coil conformation. 2 consecutive short sequence motifs (nuclear localization signal) follow at residues 379–386 (EKREAEWK) and 693–700 (IRKDVDDL). Residues serine 774 and serine 803 each carry the phosphoserine modification. Basic and acidic residues predominate over residues 849 to 859 (AESETGTKEVE). 4 disordered regions span residues 849 to 871 (AESE…DQSD), 883 to 909 (SLSN…TRSV), 924 to 1039 (INLY…VQQE), and 1061 to 1132 (GVST…FLTT). The segment covering 861-871 (TNVNSDGDQSD) has biased composition (polar residues). 2 positions are modified to phosphoserine: serine 865 and serine 883. A compositionally biased stretch (basic residues) spans 895–907 (MKGKGKARTRRTR). Residue serine 908 is modified to Phosphoserine. A phosphoserine mark is found at serine 1093, serine 1105, and serine 1112. The span at 1095 to 1105 (DVNKTPLRADS) shows a compositional bias: basic and acidic residues.

Belongs to the CRWN family. As to quaternary structure, core component of the LINC complex which is composed of inner nuclear membrane SUN domain-containing proteins coupled to outer nuclear membrane WIP and WIT proteins. The LINC complex also involves nucleoskeletal proteins CRWN/LINC and possibly KAKU4 and the cytoskeletal myosin KAKU1. Interacts with SUN1 and SUN2. Binds to KAKU4. Expressed at low levels in roots, leaves, flowers and flower stalks.

Its subcellular location is the nucleus membrane. It localises to the nucleus. The protein localises to the nucleoplasm. It is found in the nucleus lamina. Its function is as follows. Component of SUN-protein-containing multivariate complexes also called LINC complexes which link the nucleoskeleton and cytoskeleton by providing versatile outer nuclear membrane attachment sites for cytoskeletal filaments. Required for nucleus structure organization (e.g. size and shape). This is Protein CROWDED NUCLEI 1 from Arabidopsis thaliana (Mouse-ear cress).